Consider the following 652-residue polypeptide: DNA ligase (652 aa).

Residues 29 to 33, 78 to 79, and Glu107 contribute to the NAD(+) site; these read DSDYD and SL. Lys109 functions as the N6-AMP-lysine intermediate in the catalytic mechanism. Residues Arg130, Glu164, Lys278, and Lys302 each coordinate NAD(+). Zn(2+) contacts are provided by Cys395, Cys398, Cys413, and Cys418. Residues 577 to 652 enclose the BRCT domain; that stretch reads NSDAALFGLT…IEDEDWLRKF (76 aa).

This sequence belongs to the NAD-dependent DNA ligase family. LigA subfamily. It depends on Mg(2+) as a cofactor. The cofactor is Mn(2+).

The enzyme catalyses NAD(+) + (deoxyribonucleotide)n-3'-hydroxyl + 5'-phospho-(deoxyribonucleotide)m = (deoxyribonucleotide)n+m + AMP + beta-nicotinamide D-nucleotide.. Its function is as follows. DNA ligase that catalyzes the formation of phosphodiester linkages between 5'-phosphoryl and 3'-hydroxyl groups in double-stranded DNA using NAD as a coenzyme and as the energy source for the reaction. It is essential for DNA replication and repair of damaged DNA. This is DNA ligase from Streptococcus pyogenes serotype M6 (strain ATCC BAA-946 / MGAS10394).